A 177-amino-acid chain; its full sequence is MEVKMKILLDEDGIRRSITRISYEIIERNKTVDNIVLVGIKSRGDILAERIKQKLLEVENIDAPLETIDITYYRDDIDRKNFDLDIKDTEFKTNLTGKVVVIVDDVLYTGRTIRAGLDAILSKSRPAKIQLACLIDRGHRELPIRADFIGKNIPTSHSENIEVYLKELDGKEEVVIL.

Residues 42–43 (SR), 104–112 (DDVLYTGRT), and R137 contribute to the substrate site. Positions 100 to 112 (VVIVDDVLYTGRT) match the PRPP-binding motif.

It belongs to the purine/pyrimidine phosphoribosyltransferase family. PyrR subfamily.

The enzyme catalyses UMP + diphosphate = 5-phospho-alpha-D-ribose 1-diphosphate + uracil. Functionally, regulates the transcription of the pyrimidine nucleotide (pyr) operon in response to exogenous pyrimidines. In terms of biological role, also displays a weak uracil phosphoribosyltransferase activity which is not physiologically significant. In Fusobacterium nucleatum subsp. nucleatum (strain ATCC 25586 / DSM 15643 / BCRC 10681 / CIP 101130 / JCM 8532 / KCTC 2640 / LMG 13131 / VPI 4355), this protein is Bifunctional protein PyrR.